Reading from the N-terminus, the 720-residue chain is 1-deoxy-D-xylulose-5-phosphate synthase 1, chloroplastic (720 aa).

The N-terminal 51 residues, M1–S51, are a transit peptide targeting the chloroplast. Residues L35–S46 are compositionally biased toward basic residues. Positions L35–D74 are disordered. Basic and acidic residues predominate over residues T56–S65. Thiamine diphosphate contacts are provided by residues H142 and G183–S185. Position 214 (D214) interacts with Mg(2+). Residues G215–A216, N243, Y364, and E446 contribute to the thiamine diphosphate site. N243 contacts Mg(2+).

Belongs to the transketolase family. DXPS subfamily. Homodimer. Mg(2+) is required as a cofactor. It depends on thiamine diphosphate as a cofactor.

The protein localises to the plastid. It localises to the chloroplast stroma. The catalysed reaction is D-glyceraldehyde 3-phosphate + pyruvate + H(+) = 1-deoxy-D-xylulose 5-phosphate + CO2. It functions in the pathway metabolic intermediate biosynthesis; 1-deoxy-D-xylulose 5-phosphate biosynthesis; 1-deoxy-D-xylulose 5-phosphate from D-glyceraldehyde 3-phosphate and pyruvate: step 1/1. In terms of biological role, catalyzes the acyloin condensation reaction between C atoms 2 and 3 of pyruvate and glyceraldehyde 3-phosphate to yield 1-deoxy-D-xylulose-5-phosphate (DXP). Is a limiting enzyme for plastidic isoprenoid biosynthesis and essential for chloroplast development. This is 1-deoxy-D-xylulose-5-phosphate synthase 1, chloroplastic (CLA1) from Oryza sativa subsp. japonica (Rice).